Reading from the N-terminus, the 43-residue chain is Protein PsbN (43 aa).

The helical transmembrane segment at 5-27 (TLIAIFISCSLVSFTGYALYTAF) threads the bilayer.

It belongs to the PsbN family.

Its subcellular location is the plastid. The protein resides in the chloroplast thylakoid membrane. In terms of biological role, may play a role in photosystem I and II biogenesis. This chain is Protein PsbN, found in Lopidium concinnum (Moss).